We begin with the raw amino-acid sequence, 348 residues long: Phosphoribosylformylglycinamidine cyclo-ligase (348 aa).

This sequence belongs to the AIR synthase family.

It is found in the cytoplasm. The enzyme catalyses 2-formamido-N(1)-(5-O-phospho-beta-D-ribosyl)acetamidine + ATP = 5-amino-1-(5-phospho-beta-D-ribosyl)imidazole + ADP + phosphate + H(+). The protein operates within purine metabolism; IMP biosynthesis via de novo pathway; 5-amino-1-(5-phospho-D-ribosyl)imidazole from N(2)-formyl-N(1)-(5-phospho-D-ribosyl)glycinamide: step 2/2. The polypeptide is Phosphoribosylformylglycinamidine cyclo-ligase (Cereibacter sphaeroides (strain ATCC 17029 / ATH 2.4.9) (Rhodobacter sphaeroides)).